Consider the following 233-residue polypeptide: Leucyl/phenylalanyl-tRNA--protein transferase (233 aa).

This sequence belongs to the L/F-transferase family.

The protein localises to the cytoplasm. The enzyme catalyses N-terminal L-lysyl-[protein] + L-leucyl-tRNA(Leu) = N-terminal L-leucyl-L-lysyl-[protein] + tRNA(Leu) + H(+). The catalysed reaction is N-terminal L-arginyl-[protein] + L-leucyl-tRNA(Leu) = N-terminal L-leucyl-L-arginyl-[protein] + tRNA(Leu) + H(+). It carries out the reaction L-phenylalanyl-tRNA(Phe) + an N-terminal L-alpha-aminoacyl-[protein] = an N-terminal L-phenylalanyl-L-alpha-aminoacyl-[protein] + tRNA(Phe). Functionally, functions in the N-end rule pathway of protein degradation where it conjugates Leu, Phe and, less efficiently, Met from aminoacyl-tRNAs to the N-termini of proteins containing an N-terminal arginine or lysine. The polypeptide is Leucyl/phenylalanyl-tRNA--protein transferase (Anaeromyxobacter dehalogenans (strain 2CP-C)).